Consider the following 70-residue polypeptide: Small ribosomal subunit protein bS21 (70 aa).

Belongs to the bacterial ribosomal protein bS21 family.

The sequence is that of Small ribosomal subunit protein bS21 from Chromobacterium violaceum (strain ATCC 12472 / DSM 30191 / JCM 1249 / CCUG 213 / NBRC 12614 / NCIMB 9131 / NCTC 9757 / MK).